Consider the following 191-residue polypeptide: Prostaglandin-H2 D-isomerase (191 aa).

An N-terminal signal peptide occupies residues 1-24; sequence MAALHTLWMGLVLLGVLGVLQTRA. Glutamine 25 is subject to Pyrrolidone carboxylic acid. Asparagine 51 carries an N-linked (GlcNAc...) asparagine glycan. The active-site Nucleophile is the cysteine 65. Asparagine 78 is a glycosylation site (N-linked (GlcNAc...) asparagine). A disulfide bridge connects residues cysteine 89 and cysteine 186.

It belongs to the calycin superfamily. Lipocalin family. In terms of assembly, monomer. In terms of processing, N- and O-glycosylated. Both N-glycosylation recognition sites are almost quantitatively occupied by N-glycans of the biantennary complex type, with a considerable proportion of structures bearing a bisecting GlcNAc. N-glycan at Asn-78: dHex1Hex5HexNAc4. Agalacto structure as well as sialylated and nonsialylated oligosaccharides bearing alpha2-3- and/or alpha2-6-linked NeuNAc are present.

It localises to the rough endoplasmic reticulum. The protein localises to the nucleus membrane. Its subcellular location is the golgi apparatus. The protein resides in the cytoplasm. It is found in the perinuclear region. It localises to the secreted. The catalysed reaction is prostaglandin H2 = prostaglandin D2. Catalyzes the conversion of PGH2 to PGD2, a prostaglandin involved in smooth muscle contraction/relaxation and a potent inhibitor of platelet aggregation. Involved in a variety of CNS functions, such as sedation, NREM sleep and PGE2-induced allodynia, and may have an anti-apoptotic role in oligodendrocytes. Binds small non-substrate lipophilic molecules, including biliverdin, bilirubin, retinal, retinoic acid and thyroid hormone, and may act as a scavenger for harmful hydrophobic molecules and as a secretory retinoid and thyroid hormone transporter. Possibly involved in development and maintenance of the blood-brain, blood-retina, blood-aqueous humor and blood-testis barrier. It is likely to play important roles in both maturation and maintenance of the central nervous system and male reproductive system. Involved in PLA2G3-dependent maturation of mast cells. PLA2G3 is secreted by immature mast cells and acts on nearby fibroblasts upstream to PTDGS to synthesize PGD2, which in turn promotes mast cell maturation and degranulation via PTGDR. The polypeptide is Prostaglandin-H2 D-isomerase (PTGDS) (Felis catus (Cat)).